The primary structure comprises 302 residues: Sulfate adenylyltransferase subunit 2 (302 aa).

The protein belongs to the PAPS reductase family. CysD subfamily. As to quaternary structure, heterodimer composed of CysD, the smaller subunit, and CysN.

The catalysed reaction is sulfate + ATP + H(+) = adenosine 5'-phosphosulfate + diphosphate. It functions in the pathway sulfur metabolism; hydrogen sulfide biosynthesis; sulfite from sulfate: step 1/3. With CysN forms the ATP sulfurylase (ATPS) that catalyzes the adenylation of sulfate producing adenosine 5'-phosphosulfate (APS) and diphosphate, the first enzymatic step in sulfur assimilation pathway. APS synthesis involves the formation of a high-energy phosphoric-sulfuric acid anhydride bond driven by GTP hydrolysis by CysN coupled to ATP hydrolysis by CysD. The sequence is that of Sulfate adenylyltransferase subunit 2 from Escherichia coli O81 (strain ED1a).